We begin with the raw amino-acid sequence, 304 residues long: Fructose permease IIC component (304 aa).

Residues 1 to 304 (IHSADPKDPT…GIIKKPVEEK (304 aa)) enclose the PTS EIIC type-2 domain. The next 8 membrane-spanning stretches (helical) occupy residues 20-40 (FIGSDNALKLIVAVLAGFIAM), 62-82 (NAGFLGGLIAGFLAGYVVILL), 98-118 (PVLIYPLLGIFITGVLMQFVI), 140-160 (NLVLMGIILGGMMAIDMGGPL), 181-201 (AAIMAGGMVPPLGIALATTFF), 214-234 (ITCYFMGAAFVTEGAIPFAAA), 238-258 (VIPAAVIGSAVAGGLTEFFRV), and 277-297 (LLYLLSIVIGAIVTAVILGII).

It localises to the cell membrane. Its function is as follows. The phosphoenolpyruvate-dependent sugar phosphotransferase system (PTS), a major carbohydrate active -transport system, catalyzes the phosphorylation of incoming sugar substrates concomitant with their translocation across the cell membrane. This system is involved in fructose transport. In Bacillus amyloliquefaciens (Bacillus velezensis), this protein is Fructose permease IIC component (fruA).